The primary structure comprises 902 residues: Serine/threonine-protein kinase cbk1 (902 aa).

Disordered stretches follow at residues 1-22 (MSED…TCLK), 97-154 (ETHS…REDA), and 207-288 (QRMM…MVSP). The span at 97–118 (ETHSHSSDAEGTSHQDVSDRRN) shows a compositional bias: basic and acidic residues. The span at 125 to 134 (RPSSHSQADS) shows a compositional bias: polar residues. Basic and acidic residues-rich tracts occupy residues 142 to 154 (QQKE…REDA) and 210 to 221 (MLDRGNPKRERS). The span at 222 to 239 (SGSSTPSSKSSPVDSVST) shows a compositional bias: low complexity. A compositionally biased stretch (polar residues) spans 240 to 259 (APTSVSPGSLAPSGSTNNDP). The span at 264–274 (KHIDSQADLPE) shows a compositional bias: basic and acidic residues. Residues 378 to 732 (FEPLKILGRG…SPKYKQNDAI (355 aa)) form the Protein kinase domain. ATP-binding positions include 384 to 392 (LGRGSFGVV) and Lys-432. The Proton acceptor role is filled by Asp-527. The 61-residue stretch at 771 to 831 (RGINWEQIHR…KWHPLGGKGG (61 aa)) folds into the AGC-kinase C-terminal domain. The segment covering 797–806 (YFDDGEHPSD) has biased composition (basic and acidic residues). Residues 797–875 (YFDDGEHPSD…KKRLKEAKRA (79 aa)) form a disordered region. Residues 807-818 (REDDSSDSELDG) show a composition bias toward acidic residues. A compositionally biased stretch (basic and acidic residues) spans 833-843 (HKPDKPLKADV).

It belongs to the protein kinase superfamily. STE Ser/Thr protein kinase family. COT1 subfamily.

The catalysed reaction is L-seryl-[protein] + ATP = O-phospho-L-seryl-[protein] + ADP + H(+). It carries out the reaction L-threonyl-[protein] + ATP = O-phospho-L-threonyl-[protein] + ADP + H(+). Protein kinase that seems to play a role in the regulation of cell morphogenesis and proliferation. In Emericella nidulans (strain FGSC A4 / ATCC 38163 / CBS 112.46 / NRRL 194 / M139) (Aspergillus nidulans), this protein is Serine/threonine-protein kinase cbk1 (cbk1).